Reading from the N-terminus, the 182-residue chain is Ribulose bisphosphate carboxylase small subunit, chloroplastic 3 (182 aa).

The transit peptide at 1–41 (MASIMMNKSVVLSKECAKPLASPKVTLNKRGFATTIATKNR) directs the protein to the chloroplast.

Belongs to the RuBisCO small chain family. As to quaternary structure, heterohexadecamer of 8 large and 8 small subunits.

The protein resides in the plastid. It localises to the chloroplast. Functionally, ruBisCO catalyzes two reactions: the carboxylation of D-ribulose 1,5-bisphosphate, the primary event in carbon dioxide fixation, as well as the oxidative fragmentation of the pentose substrate. Both reactions occur simultaneously and in competition at the same active site. Although the small subunit is not catalytic it is essential for maximal activity. In Acetabularia acetabulum (Mermaid's wine glass), this protein is Ribulose bisphosphate carboxylase small subunit, chloroplastic 3.